Reading from the N-terminus, the 356-residue chain is UDP-N-acetylglucosamine--N-acetylmuramyl-(pentapeptide) pyrophosphoryl-undecaprenol N-acetylglucosamine transferase (356 aa).

Residues 14–16 (TGG), asparagine 126, arginine 162, serine 190, isoleucine 244, and glutamine 289 contribute to the UDP-N-acetyl-alpha-D-glucosamine site.

The protein belongs to the glycosyltransferase 28 family. MurG subfamily.

The protein localises to the cell inner membrane. It catalyses the reaction di-trans,octa-cis-undecaprenyl diphospho-N-acetyl-alpha-D-muramoyl-L-alanyl-D-glutamyl-meso-2,6-diaminopimeloyl-D-alanyl-D-alanine + UDP-N-acetyl-alpha-D-glucosamine = di-trans,octa-cis-undecaprenyl diphospho-[N-acetyl-alpha-D-glucosaminyl-(1-&gt;4)]-N-acetyl-alpha-D-muramoyl-L-alanyl-D-glutamyl-meso-2,6-diaminopimeloyl-D-alanyl-D-alanine + UDP + H(+). Its pathway is cell wall biogenesis; peptidoglycan biosynthesis. In terms of biological role, cell wall formation. Catalyzes the transfer of a GlcNAc subunit on undecaprenyl-pyrophosphoryl-MurNAc-pentapeptide (lipid intermediate I) to form undecaprenyl-pyrophosphoryl-MurNAc-(pentapeptide)GlcNAc (lipid intermediate II). The polypeptide is UDP-N-acetylglucosamine--N-acetylmuramyl-(pentapeptide) pyrophosphoryl-undecaprenol N-acetylglucosamine transferase (Cupriavidus necator (strain ATCC 17699 / DSM 428 / KCTC 22496 / NCIMB 10442 / H16 / Stanier 337) (Ralstonia eutropha)).